The following is a 577-amino-acid chain: Insulin-like growth factor 2 mRNA-binding protein 1 (577 aa).

2 RRM domains span residues 2–75 (NKLY…HSVP) and 81–156 (RKIQ…YIPD). Residues Ser12 and Ser73 each carry the phosphoserine modification. Residues 156 to 190 (DEQITQGPENGRRGGFGSRGQPRQGSPVAAGAPAK) are disordered. Ser181 bears the Phosphoserine; by MTOR mark. KH domains are found at residues 195–260 (DIPL…CKMI), 276–343 (EVPL…EQEI), 405–470 (QEMV…QGRI), and 487–553 (KLET…QRKI). Residues 312–323 (ISSLQDLTLYNP) are sufficient for nuclear export. Positions 485 to 495 (EVKLETHIRVP) are sufficient for nuclear export. Residue Thr528 is modified to Phosphothreonine.

This sequence belongs to the RRM IMP/VICKZ family. In terms of assembly, can form homodimers and heterodimers with IGF2BP1 and IGF2BP3. Component of the coding region determinant (CRD)-mediated complex, composed of DHX9, HNRNPU, IGF2BP1, SYNCRIP and YBX1. Identified in a mRNP complex, at least composed of DHX9, DDX3X, ELAVL1, HNRNPU, IGF2BP1, ILF3, PABPC1, PCBP2, PTBP2, STAU1, STAU2, SYNCRIP and YBX1. Associates with mRNP complex. Interacts with FMR1. Component of a multisubunit autoregulatory RNP complex (ARC), at least composed of IGF2BP1, PABPC1 and CSDE1. Interacts with AGO1 and AGO2. Interacts, through domains KH3 and KH4, with PABPC1 in an RNA-independent manner. Component of a TAU mRNP complex, at least composed of IGF2BP1, ELAVL4 and G3BP. Interacts with ELAVL4 in an RNA-dependent manner. Associates with microtubules and polysomes. Interacts with ELAVL1 and MATR3. Phosphorylated at Ser-181 by mTORC2 cotranslationally, promoting binding to the 3'-UTR of IGF2 mRNA. As to expression, expressed in zygotes and blastocysts (at protein level). Expressed in brain, skeletal muscle, trophoblasts of placenta, oocytes and spermatogonia (at protein level). Expressed in testis and ovary. Following colon injury, expressed in the wound bed mesenchyme during the first phase of repair, probably by colonic mesenchymal stem cells (at protein level).

It localises to the nucleus. The protein localises to the cytoplasm. Its subcellular location is the perinuclear region. The protein resides in the P-body. It is found in the stress granule. It localises to the cell projection. The protein localises to the lamellipodium. Its subcellular location is the dendrite. The protein resides in the dendritic spine. It is found in the growth cone. It localises to the filopodium. The protein localises to the axon. Functionally, RNA-binding factor that recruits target transcripts to cytoplasmic protein-RNA complexes (mRNPs). This transcript 'caging' into mRNPs allows mRNA transport and transient storage. It also modulates the rate and location at which target transcripts encounter the translational apparatus and shields them from endonuclease attacks or microRNA-mediated degradation. Preferentially binds to N6-methyladenosine (m6A)-containing mRNAs and increases their stability. Regulates localized beta-actin/ACTB mRNA translation, a crucial process for cell polarity, cell migration and neurite outgrowth. Co-transcriptionally associates with the ACTB mRNA in the nucleus. This binding involves a conserved 54-nucleotide element in the ACTB mRNA 3'-UTR, known as the 'zipcode'. The RNP thus formed is exported to the cytoplasm, binds to a motor protein and is transported along the cytoskeleton to the cell periphery. During transport, prevents ACTB mRNA from being translated into protein. When the RNP complex reaches its destination near the plasma membrane, IGF2BP1 is phosphorylated. This releases the mRNA, allowing ribosomal 40S and 60S subunits to assemble and initiate ACTB protein synthesis. Monomeric ACTB then assembles into the subcortical actin cytoskeleton. During neuronal development, key regulator of neurite outgrowth, growth cone guidance and neuronal cell migration, presumably through the spatiotemporal fine tuning of protein synthesis, such as that of ACTB. May regulate mRNA transport to activated synapses. Binds to the 3'-UTR of CD44 mRNA and stabilizes it, hence promotes cell adhesion and invadopodia formation in cancer cells. Binds to the oncofetal H19 transcript and regulates its localization. Binds to and stabilizes BTRC/FBW1A mRNA. Binds to the adenine-rich autoregulatory sequence (ARS) located in PABPC1 mRNA and represses its translation. PABPC1 mRNA-binding is stimulated by PABPC1 protein. Prevents BTRC/FBW1A mRNA degradation by disrupting microRNA-dependent interaction with AGO2. During cellular stress, such as oxidative stress or heat shock, stabilizes target mRNAs that are recruited to stress granules, including CD44, IGF2, MAPK4, MYC, PTEN, RAPGEF2 and RPS6KA5 transcripts. Interacts with GAP43 transcript and transports it to axons. Binds to the 3'-UTR of IGF2 mRNA by a mechanism of cooperative and sequential dimerization and regulates IGF2 mRNA subcellular localization and translation. Binds to MYC mRNA, in the coding region instability determinant (CRD) of the open reading frame (ORF), hence prevents MYC cleavage by endonucleases and possibly microRNA targeting to MYC-CRD. Binding to MYC mRNA is enhanced by m6A-modification of the CRD. Binds to and stabilizes ABCB1/MDR-1 mRNA. Binds to the neuron-specific TAU mRNA and regulates its localization. Plays a direct role in the transport and translation of transcripts required for axonal regeneration in adult sensory neurons. During interstinal wound repair, interacts with and stabilizes PTGS2 transcript. PTGS2 mRNA stabilization may be crucial for colonic mucosal wound healing. The chain is Insulin-like growth factor 2 mRNA-binding protein 1 (Igf2bp1) from Mus musculus (Mouse).